We begin with the raw amino-acid sequence, 862 residues long: Leucine--tRNA ligase (862 aa).

A 'HIGH' region motif is present at residues 44-54 (PYPSGRIHMGH). The 'KMSKS' region motif lies at 622-626 (KMSKS). Lys625 provides a ligand contact to ATP.

This sequence belongs to the class-I aminoacyl-tRNA synthetase family.

It localises to the cytoplasm. The catalysed reaction is tRNA(Leu) + L-leucine + ATP = L-leucyl-tRNA(Leu) + AMP + diphosphate. The sequence is that of Leucine--tRNA ligase from Rhodospirillum rubrum (strain ATCC 11170 / ATH 1.1.1 / DSM 467 / LMG 4362 / NCIMB 8255 / S1).